The following is a 958-amino-acid chain: Protein translocase subunit SecA (958 aa).

ATP-binding positions include Q87, 105–109 (GEGKT), and D524. Residues 598 to 617 (RRIDNQLRGRSGRQGDPGRS) are disordered. Zn(2+) contacts are provided by C939, C941, C950, and H951.

It belongs to the SecA family. In terms of assembly, monomer and homodimer. Part of the essential Sec protein translocation apparatus which comprises SecA, SecYEG and auxiliary proteins SecDF-YajC and YidC. Zn(2+) is required as a cofactor.

The protein localises to the cell inner membrane. The protein resides in the cytoplasm. It catalyses the reaction ATP + H2O + cellular proteinSide 1 = ADP + phosphate + cellular proteinSide 2.. Functionally, part of the Sec protein translocase complex. Interacts with the SecYEG preprotein conducting channel. Has a central role in coupling the hydrolysis of ATP to the transfer of proteins into and across the cell membrane, serving both as a receptor for the preprotein-SecB complex and as an ATP-driven molecular motor driving the stepwise translocation of polypeptide chains across the membrane. This Methylobacterium sp. (strain 4-46) protein is Protein translocase subunit SecA.